Consider the following 323-residue polypeptide: Probable pectate lyase A (323 aa).

Residues 1–20 form the signal peptide; it reads MTNFKWIVAAAGLLSGQVLA. The N-linked (GlcNAc...) asparagine glycan is linked to N95. Residues D136, D165, and D169 each contribute to the Ca(2+) site. R222 is a catalytic residue.

The protein belongs to the polysaccharide lyase 1 family. The cofactor is Ca(2+).

It is found in the secreted. The catalysed reaction is Eliminative cleavage of (1-&gt;4)-alpha-D-galacturonan to give oligosaccharides with 4-deoxy-alpha-D-galact-4-enuronosyl groups at their non-reducing ends.. In terms of biological role, pectinolytic enzyme consist of four classes of enzymes: pectin lyase, polygalacturonase, pectin methylesterase and rhamnogalacturonase. Among pectinolytic enzymes, pectin lyase is the most important in depolymerization of pectin, since it cleaves internal glycosidic bonds of highly methylated pectins. Favors pectate, the anion, over pectin, the methyl ester. In Aspergillus niger (strain ATCC MYA-4892 / CBS 513.88 / FGSC A1513), this protein is Probable pectate lyase A (plyA).